A 425-amino-acid chain; its full sequence is Histidinol dehydrogenase (425 aa).

The substrate site is built by Ser231, Gln253, and His256. Positions 253 and 256 each coordinate Zn(2+). Catalysis depends on proton acceptor residues Glu321 and His322. The substrate site is built by His322, Asp355, Glu409, and His414. Asp355 contacts Zn(2+). His414 serves as a coordination point for Zn(2+).

It belongs to the histidinol dehydrogenase family. It depends on Zn(2+) as a cofactor.

It carries out the reaction L-histidinol + 2 NAD(+) + H2O = L-histidine + 2 NADH + 3 H(+). Its pathway is amino-acid biosynthesis; L-histidine biosynthesis; L-histidine from 5-phospho-alpha-D-ribose 1-diphosphate: step 9/9. Catalyzes the sequential NAD-dependent oxidations of L-histidinol to L-histidinaldehyde and then to L-histidine. In Carboxydothermus hydrogenoformans (strain ATCC BAA-161 / DSM 6008 / Z-2901), this protein is Histidinol dehydrogenase.